Here is a 946-residue protein sequence, read N- to C-terminus: Villin-4 (946 aa).

Gelsolin-like repeat units follow at residues 28 to 109 (NFKP…ETEK), 152 to 219 (VHVK…EDGK), 274 to 339 (LEHE…TIMF), and 641 to 715 (EIHH…PQFF). Disordered stretches follow at residues 744-783 (ATPSLDKPKRRTPAFSGRNAGQDKSQQRTRSMSHSPERHR) and 846-902 (TKST…PAPD). Residues 765–777 (QDKSQQRTRSMSH) show a composition bias toward polar residues. Over residues 874-883 (SENEPEDDEN) the composition is skewed to acidic residues. The HP domain occupies 881–946 (DENSTIYPYE…NRLKSDLQLF (66 aa)).

Belongs to the villin/gelsolin family.

It localises to the cytoplasm. The protein resides in the cytoskeleton. Its function is as follows. Ca(2+)-regulated actin-binding protein. Binds actin microfilaments (MFs). Involved in actin filament bundling, severing and capping. Caps the barbed end of actin filaments and is able to sever them in a calcium-dependent manner. In Oryza sativa subsp. indica (Rice), this protein is Villin-4.